Consider the following 296-residue polypeptide: Light-independent protochlorophyllide reductase iron-sulfur ATP-binding protein (296 aa).

ATP-binding positions include 10–15 (GIGKST) and Lys-39. Residue Ser-14 participates in Mg(2+) binding. Cys-95 and Cys-129 together coordinate [4Fe-4S] cluster. Residue 180-181 (NR) coordinates ATP.

This sequence belongs to the NifH/BchL/ChlL family. As to quaternary structure, homodimer. Protochlorophyllide reductase is composed of three subunits; ChlL, ChlN and ChlB. It depends on [4Fe-4S] cluster as a cofactor.

The protein resides in the plastid. Its subcellular location is the chloroplast. It catalyses the reaction chlorophyllide a + oxidized 2[4Fe-4S]-[ferredoxin] + 2 ADP + 2 phosphate = protochlorophyllide a + reduced 2[4Fe-4S]-[ferredoxin] + 2 ATP + 2 H2O. It functions in the pathway porphyrin-containing compound metabolism; chlorophyll biosynthesis (light-independent). Component of the dark-operative protochlorophyllide reductase (DPOR) that uses Mg-ATP and reduced ferredoxin to reduce ring D of protochlorophyllide (Pchlide) to form chlorophyllide a (Chlide). This reaction is light-independent. The L component serves as a unique electron donor to the NB-component of the complex, and binds Mg-ATP. The sequence is that of Light-independent protochlorophyllide reductase iron-sulfur ATP-binding protein from Chlorokybus atmophyticus (Soil alga).